Reading from the N-terminus, the 142-residue chain is Pro-vaccinia growth factor (142 aa).

The first 18 residues, 1–18 (MSMKYLMLLFAAMIIRSF), serve as a signal peptide directing secretion. Residues 19–100 (ADSGNAIETT…SENPNTTTSY (82 aa)) are Extracellular-facing. Asparagine 34 carries N-linked (GlcNAc...) asparagine; by host glycosylation. The 41-residue stretch at 41–81 (AIRLCGPEGDGYCLHGDCIHARDIDGMYCRCSHGYTGIRCQ) folds into the EGF-like domain. Cystine bridges form between cysteine 45–cysteine 58, cysteine 53–cysteine 69, and cysteine 71–cysteine 80. A glycan (N-linked (GlcNAc...) asparagine; by host) is linked at asparagine 95. A helical transmembrane segment spans residues 101-121 (IPSPGIMLVLVGIIIIITCCL). Residues 122–142 (LSVYRFTRRTNKLPLQDMVVP) are Cytoplasmic-facing.

The protein belongs to the orthopoxvirus OPG019 family. As to quaternary structure, vaccinia growth factor interacts with host EGFR and promotes EGFR dimerization.

Its subcellular location is the host membrane. The protein resides in the secreted. In terms of biological role, stimulates cellular proliferation (hyperplasia)and mobility around infected cells to promote rapid and efficient spread of infection. This effect is beneficial for virus replication in vivo, because poxviruses replicate possibly better in proliferating cells than in quiescent cells. Acts by binding host EGFR, inducing its dimerization, autophosphorylation and leading to activation of several cellular pathways regulating cell proliferation or cell survival. The activation by host EGFR of mitogen activated protein kinases (MAPK) and extracellular-signal regulated kinases (ERK) are essential for the positive effect of vaccinia growth factor on poxvirus virulence in vivo. This Vaccinia virus (strain Copenhagen) (VACV) protein is Pro-vaccinia growth factor (OPG019).